Reading from the N-terminus, the 1014-residue chain is Latrophilin-like protein 1 (1014 aa).

The N-terminal stretch at 1-27 is a signal peptide; the sequence is MRRNKTTYSLLQTILVACLLTVTPTFA. N4 is a glycosylation site (N-linked (GlcNAc...) asparagine). Over 28–555 the chain is Extracellular; that stretch reads SNKPTTDESG…IDQTLLTLLT (528 aa). One can recognise an SUEL-type lectin domain in the interval 43-134; that stretch reads ICDGEAAELS…KYLEVKYNCV (92 aa). Residues 359–542 form the GAIN-B domain; sequence ESNVIVQPAI…AVLMDVRGHD (184 aa). N-linked (GlcNAc...) asparagine glycans are attached at residues N473 and N518. 2 disulfides stabilise this stretch: C497–C524 and C512–C526. The tract at residues 497–542 is GPS; the sequence is CVWWNHHELKWKPSGCKLSYHNKTMTSCDCTHLTHFAVLMDVRGHD. A helical transmembrane segment spans residues 556–576; that stretch reads YVGCIISIICLLLTFFAYLIF. Residues 577 to 584 are Cytoplasmic-facing; sequence SRNGGDRV. A helical transmembrane segment spans residues 585 to 605; it reads FIHENLCLSLAIAEITFLAGI. Topologically, residues 606 to 613 are extracellular; sequence TRTEDSLQ. A helical membrane pass occupies residues 614–634; it reads CGIIAVALMYMFLSALTWMLL. Residues 635-653 lie on the Cytoplasmic side of the membrane; the sequence is EGYHIHRMLTEVFPSDPRR. Residues 654-674 traverse the membrane as a helical segment; that stretch reads FTYLLVGYIPPAIITLVAYLY. The Extracellular segment spans residues 675–692; the sequence is NSDGFGTPDHCWLSTQNN. The helical transmembrane segment at 693-713 threads the bilayer; that stretch reads FIWFFAGPACFIFCANSLVLV. Topologically, residues 714–745 are cytoplasmic; the sequence is KTLCTVYQHTSGGYLPCRHDVDSGRSIRNWVK. Residues 746–766 traverse the membrane as a helical segment; sequence GSLALASLLGVTWIFGLFWVE. Topologically, residues 767–770 are extracellular; the sequence is DSRS. A helical transmembrane segment spans residues 771–791; that stretch reads IVMAYVFTISNSLQGLFIFLF. The Cytoplasmic segment spans residues 792–1014; that stretch reads HVVFAEKMRK…NKPSMYCQDL (223 aa). Disordered regions lie at residues 814-833 and 932-994; these read GSSNSSPNHKRHNVQRDLMS and YQGW…EVTP. Positions 941 to 952 are enriched in pro residues; sequence PEFSPPPPPLST. Over residues 965–986 the composition is skewed to low complexity; sequence SGRRPPSSKMSDDSAYSDGSSS.

Belongs to the G-protein coupled receptor 2 family. LN-TM7 subfamily. In terms of assembly, monomer and homodimer. In terms of processing, autoproteolytically processed at the GPS region of the GAIN-B domain; this cleavage modulates receptor activity. As to expression, expressed in epidermal precursor cells and pharyngeal primordium. In adults expression is seen in pharyngeal muscle cells and nervous system, the nerve ring, the gonad, and the vulva.

The protein resides in the cell membrane. Has a role in the establishment of anterior-posterior polarity in tissues during embryogenesis. Required for the alignment of the mitotic spindles and division planes. May have a role in cell death events. Required for normal defection and oocyte fertilization. Involved in sperm function. Operates in pharyngeal pumping during feeding. The protein is Latrophilin-like protein 1 of Caenorhabditis elegans.